The chain runs to 223 residues: Proteasome subunit beta type-1 (223 aa).

The protein belongs to the peptidase T1B family. In terms of assembly, the 26S proteasome consists of a 20S proteasome core and two 19S regulatory subunits. The 20S proteasome core is composed of 28 subunits that are arranged in four stacked rings, resulting in a barrel-shaped structure. The two end rings are each formed by seven alpha subunits, and the two central rings are each formed by seven beta subunits. The catalytic chamber with the active sites is on the inside of the barrel.

It localises to the cytoplasm. It is found in the nucleus. In terms of biological role, non-catalytic component of the proteasome, a multicatalytic proteinase complex which is characterized by its ability to cleave peptides with Arg, Phe, Tyr, Leu, and Glu adjacent to the leaving group at neutral or slightly basic pH. The proteasome has an ATP-dependent proteolytic activity. This Petunia hybrida (Petunia) protein is Proteasome subunit beta type-1 (PBF1).